The chain runs to 65 residues: Small ribosomal subunit protein bS21 (65 aa).

The protein belongs to the bacterial ribosomal protein bS21 family.

This Flavobacterium psychrophilum (strain ATCC 49511 / DSM 21280 / CIP 103535 / JIP02/86) protein is Small ribosomal subunit protein bS21.